The primary structure comprises 378 residues: MNIALADDKVWHKGKSYRKGYTTGSCATAAAKVATLMILRQQVIHQVSIVTPSGVTLQLNVEEPLIHGLQASAAIRKDGGDDVDATHGMLIYAQVVLRNDATITISGGTGVGKVTRKGIGLPVGNAAINKTPLQTIEAAVREVLGPERGADITIFAPEGEERAQRTYNGRLGIEGGISIIGTTGIVTPMSEESWKRSLALELEQKRAQGMEKIILVPGNHGERFVREQMQLDSELVVTMSNFVGYMLQEAERLAFRHVVLIGHLGKLIKVAAGIFHTHSHIADGRMETLITHLALLGAPNSLLQAIYACNTTEAAMELIEAQGYQEVYNTIATRICERINQMLRYSPQPFQCDAILFSLDNQPLGSNRPITDIVEALR.

Belongs to the CbiD family.

The catalysed reaction is Co-precorrin-5B + S-adenosyl-L-methionine = Co-precorrin-6A + S-adenosyl-L-homocysteine. Its pathway is cofactor biosynthesis; adenosylcobalamin biosynthesis; cob(II)yrinate a,c-diamide from sirohydrochlorin (anaerobic route): step 6/10. In terms of biological role, catalyzes the methylation of C-1 in cobalt-precorrin-5B to form cobalt-precorrin-6A. This is Cobalt-precorrin-5B C(1)-methyltransferase from Tolumonas auensis (strain DSM 9187 / NBRC 110442 / TA 4).